A 202-amino-acid chain; its full sequence is ATP-dependent Clp protease proteolytic subunit (202 aa).

Serine 106 (nucleophile) is an active-site residue. Histidine 131 is an active-site residue.

This sequence belongs to the peptidase S14 family. As to quaternary structure, fourteen ClpP subunits assemble into 2 heptameric rings which stack back to back to give a disk-like structure with a central cavity, resembling the structure of eukaryotic proteasomes.

The protein resides in the cytoplasm. The catalysed reaction is Hydrolysis of proteins to small peptides in the presence of ATP and magnesium. alpha-casein is the usual test substrate. In the absence of ATP, only oligopeptides shorter than five residues are hydrolyzed (such as succinyl-Leu-Tyr-|-NHMec, and Leu-Tyr-Leu-|-Tyr-Trp, in which cleavage of the -Tyr-|-Leu- and -Tyr-|-Trp bonds also occurs).. Its function is as follows. Cleaves peptides in various proteins in a process that requires ATP hydrolysis. Has a chymotrypsin-like activity. Plays a major role in the degradation of misfolded proteins. The sequence is that of ATP-dependent Clp protease proteolytic subunit from Paracidovorax citrulli (strain AAC00-1) (Acidovorax citrulli).